An 842-amino-acid polypeptide reads, in one-letter code: Axin-1 (842 aa).

Residues 1 to 75 (MSVKGKGFPL…LDLGYEPEGS (75 aa)) are disordered. Residues 34 to 46 (TTDQRPFSHTYYS) are compositionally biased toward polar residues. An RGS domain is found at 88-211 (SLHSLLDDQD…LKSDIYLEYT (124 aa)). Disordered stretches follow at residues 218 to 242 (PKNYSDQSSGSGTGKGPSGYLPTLN), 277 to 297 (SHCAGSNRRLSDGREFRPGTW), 316 to 344 (TSANDSEQQSMSSDADTMSLTDSSVDGIP), 414 to 451 (KRVRAEEEGDDGDVSSGPSVISHKLPSGPPMHHFNSRY), 482 to 532 (KTPG…AKVD), 543 to 562 (YHHVHHHGGVKPKEQIDGES), 615 to 637 (KKADLGKSESASHEMPVVPEDSE), 656 to 675 (HKKSNHSSSSAKKQPPTELA), and 729 to 754 (RLEEEEKKAAKMPQKQRLKPQKKNVS). Residues 316 to 339 (TSANDSEQQSMSSDADTMSLTDSS) are compositionally biased toward polar residues. The tract at residues 348 to 433 (LRKHYRREMQ…DGDVSSGPSV (86 aa)) is interaction with GSK3B. An interaction with beta-catenin region spans residues 434 to 508 (ISHKLPSGPP…RSPDGHLSKT (75 aa)). The segment covering 543–552 (YHHVHHHGGV) has biased composition (basic residues). Residues 615 to 626 (KKADLGKSESAS) are compositionally biased toward basic and acidic residues. The 83-residue stretch at 760-842 (CDNIVVAYYF…KIIGQVEKID (83 aa)) folds into the DIX domain.

Homodimer. Interacts with hwa; leading to promote the tankyrase-mediated degradation of axin1. In terms of processing, ADP-ribosylated by tankyrase tnks and tnks2. Poly-ADP-ribosylated protein is recognized by rnf146, followed by ubiquitination at 'Lys-48' and subsequent activation of the Wnt signaling pathway. Ubiquitinated by rnf146 when poly-ADP-ribosylated, leading to its degradation and subsequent activation of the Wnt signaling pathway.

The protein localises to the cytoplasm. Its subcellular location is the nucleus. The protein resides in the membrane. It is found in the cell membrane. In terms of biological role, component of the beta-catenin destruction complex required for regulating ctnnb1 levels through phosphorylation and ubiquitination, and modulating Wnt-signaling. Controls dorsoventral patterning via two opposing effects; down-regulates ctnnb1 to inhibit the Wnt signaling pathway and ventralize embryos, but also dorsalizes embryos by activating a Wnt-independent JNK signaling pathway. In Xenopus laevis (African clawed frog), this protein is Axin-1 (axin1).